The chain runs to 369 residues: Outer membrane protein P2 (369 aa).

Positions 1-20 are cleaved as a signal peptide; the sequence is MKKTLAALIVGAFAASAANA.

Belongs to the Gram-negative porin family. Homotrimer.

It localises to the cell outer membrane. Its function is as follows. Forms pores that allow passive diffusion of small molecules across the outer membrane. This is Outer membrane protein P2 (ompP2) from Haemophilus influenzae.